Consider the following 256-residue polypeptide: DNA repair protein RecO (256 aa).

Belongs to the RecO family.

In terms of biological role, involved in DNA repair and RecF pathway recombination. The sequence is that of DNA repair protein RecO from Delftia acidovorans (strain DSM 14801 / SPH-1).